We begin with the raw amino-acid sequence, 785 residues long: Endonuclease MutS2 (785 aa).

335–342 (GPNTGGKT) is a binding site for ATP. The region spanning 710–785 (LDLRGERYED…GNGVTIVEFK (76 aa)) is the Smr domain.

Belongs to the DNA mismatch repair MutS family. MutS2 subfamily. Homodimer. Binds to stalled ribosomes, contacting rRNA.

Functionally, endonuclease that is involved in the suppression of homologous recombination and thus may have a key role in the control of bacterial genetic diversity. In terms of biological role, acts as a ribosome collision sensor, splitting the ribosome into its 2 subunits. Detects stalled/collided 70S ribosomes which it binds and splits by an ATP-hydrolysis driven conformational change. Acts upstream of the ribosome quality control system (RQC), a ribosome-associated complex that mediates the extraction of incompletely synthesized nascent chains from stalled ribosomes and their subsequent degradation. Probably generates substrates for RQC. This chain is Endonuclease MutS2, found in Listeria monocytogenes serovar 1/2a (strain ATCC BAA-679 / EGD-e).